A 261-amino-acid chain; its full sequence is MAAISTCQTVIPLPIPVFFNQQFPTLVDICARWQLVFDADAPFELRFESDTLTLHKRDEPKLDGIVVDFVTGAVAHRRKFGGGRGQSIAKAVGLKQGVTPKVVDGTAGLGRDAFVLASLGCTVIMVERHPVVAALLEDGLRRAYQDAEIGDWMRERMQLFHGSSLEALAKLEQEVDVVYLDPMYPHRDKSALVKKEMRVFQTLVGADLDADGLLAPAMALASKRVVVKRPDYAEDLAGVKPSMVIETKKNRFDVYVKSAMK.

Residues 111 to 112, 127 to 128, 163 to 164, and aspartate 181 each bind S-adenosyl-L-methionine; these read RD, ER, and SS.

This sequence belongs to the methyltransferase superfamily. RsmJ family.

The protein resides in the cytoplasm. The catalysed reaction is guanosine(1516) in 16S rRNA + S-adenosyl-L-methionine = N(2)-methylguanosine(1516) in 16S rRNA + S-adenosyl-L-homocysteine + H(+). In terms of biological role, specifically methylates the guanosine in position 1516 of 16S rRNA. In Shewanella sp. (strain ANA-3), this protein is Ribosomal RNA small subunit methyltransferase J.